The chain runs to 437 residues: Elongation factor Tu, mitochondrial (437 aa).

The N-terminal 38 residues, 1 to 38, are a transit peptide targeting the mitochondrion; it reads MSALLPRLLTRTAFKASGKLLRLSSVISRTFSQTTTSY. Residues 46–242 enclose the tr-type G domain; the sequence is KPHVNIGTIG…AVDEYIPTPE (197 aa). A G1 region spans residues 55–62; sequence GHVDHGKT. 55-62 serves as a coordination point for GTP; it reads GHVDHGKT. Residues 96–100 form a G2 region; sequence GITIS. The G3 stretch occupies residues 117 to 120; it reads DCPG. Residues 117–121 and 172–175 contribute to the GTP site; these read DCPGH and NKVD. Residues 172–175 are G4; it reads NKVD. The G5 stretch occupies residues 210 to 212; the sequence is SAL.

The protein belongs to the TRAFAC class translation factor GTPase superfamily. Classic translation factor GTPase family. EF-Tu/EF-1A subfamily. Post-translationally, the precursor is processed in two steps involving mitochondrial intermediate peptidase (MIP) and mitochondrial processing peptidase (MPP).

The protein localises to the mitochondrion. The protein operates within protein biosynthesis; polypeptide chain elongation. Its function is as follows. G-protein that, in its active GTP-bound form, binds to and delivers aminoacyl-tRNA to the A-site of ribosomes during protein biosynthesis. In the presence of a correct codon-anticodon match between the aminoacyl-tRNA and the A-site codon of the ribosome-bound mRNA, the ribosome acts as a GTPase activator and the GTP is hydrolyzed. The inactive GDP-bound form leaves the ribosome and must be recycled before binding another molecule of aminoacyl-tRNA. Required for mitochondrial protein biosynthesis and maintenance of mitochondrial DNA. The sequence is that of Elongation factor Tu, mitochondrial (TUF1) from Saccharomyces cerevisiae (strain ATCC 204508 / S288c) (Baker's yeast).